A 334-amino-acid chain; its full sequence is MDRTLVQEILEVVEQAAIASAQLTGLGQKDEADAAAVEAMRKRMGTIQMQGRIVIGEGERDEAPMLYIGEEVGSGTGPGVDFAVDPCEGTNLCANSQRGSMAVLAASDRGGLFNAPDFYMNKLAAPPAAKGKVDIRKTPTENIKILSDCLGIAISDLTIVVMDRARHKNLVSEIRSTGARIQPISDGDVQAAIACGFEGTGTHCLMGIGAAPEGVISAAAMRALGGHFQGQLVYDPAIAQTSEWADYTKEGNIKRLNEMGITDIDKIYEANELASGENVAFAGSGITDGLLFDGVKFEKDCTRTSSLVISTLDQTARFTNTVHIKDGAQSISLK.

The Mn(2+) site is built by aspartate 33, glutamate 57, aspartate 85, and glutamate 88. Residues 88 to 90 (EGT), tyrosine 119, 164 to 166 (RAR), and 186 to 188 (DGD) each bind substrate. Position 213 (glutamate 213) interacts with Mn(2+).

The protein belongs to the FBPase class 2 family. In terms of assembly, homotetramer. It depends on Mn(2+) as a cofactor.

It carries out the reaction beta-D-fructose 1,6-bisphosphate + H2O = beta-D-fructose 6-phosphate + phosphate. The enzyme catalyses D-sedoheptulose 1,7-bisphosphate + H2O = D-sedoheptulose 7-phosphate + phosphate. It functions in the pathway carbohydrate biosynthesis; Calvin cycle. In terms of biological role, catalyzes the hydrolysis of fructose 1,6-bisphosphate (Fru 1,6-P2) and sedoheptulose 1,7-bisphosphate (Sed 1,7-P2) to fructose 6-phosphate and sedoheptulose 7-phosphate, respectively. The chain is D-fructose 1,6-bisphosphatase class 2/sedoheptulose 1,7-bisphosphatase from Prochlorococcus marinus (strain NATL1A).